The primary structure comprises 275 residues: Large ribosomal subunit protein uL2 (275 aa).

Residues 224-275 (AMNPVDHPHGGGEAKAGQGNPHPVTPWGVPTKGYKTRKNKRTQQFIVRDRRG) are disordered.

Belongs to the universal ribosomal protein uL2 family. As to quaternary structure, part of the 50S ribosomal subunit. Forms a bridge to the 30S subunit in the 70S ribosome.

One of the primary rRNA binding proteins. Required for association of the 30S and 50S subunits to form the 70S ribosome, for tRNA binding and peptide bond formation. It has been suggested to have peptidyltransferase activity; this is somewhat controversial. Makes several contacts with the 16S rRNA in the 70S ribosome. This is Large ribosomal subunit protein uL2 from Xanthomonas oryzae pv. oryzae (strain MAFF 311018).